The following is a 186-amino-acid chain: NADH dehydrogenase [ubiquinone] 1 beta subcomplex subunit 8, mitochondrial (186 aa).

Residues 1–28 (MAVARAGVLGVQWLQRASRNVMPLGART) constitute a mitochondrion transit peptide. A helical transmembrane segment spans residues 133-153 (LFGFLAFMIFMCWVGDVYPVY).

Belongs to the complex I NDUFB8 subunit family. Complex I is composed of 45 different subunits.

Its subcellular location is the mitochondrion inner membrane. In terms of biological role, accessory subunit of the mitochondrial membrane respiratory chain NADH dehydrogenase (Complex I), that is believed not to be involved in catalysis. Complex I functions in the transfer of electrons from NADH to the respiratory chain. The immediate electron acceptor for the enzyme is believed to be ubiquinone. This chain is NADH dehydrogenase [ubiquinone] 1 beta subcomplex subunit 8, mitochondrial (NDUFB8), found in Homo sapiens (Human).